Here is a 64-residue protein sequence, read N- to C-terminus: Large ribosomal subunit protein bL35 (64 aa).

Belongs to the bacterial ribosomal protein bL35 family.

In Colwellia psychrerythraea (strain 34H / ATCC BAA-681) (Vibrio psychroerythus), this protein is Large ribosomal subunit protein bL35.